We begin with the raw amino-acid sequence, 434 residues long: Calcium uptake protein 2, mitochondrial (434 aa).

The N-terminal 22 residues, 1 to 22, are a transit peptide targeting the mitochondrion; the sequence is MAAAAGSCARVAAWGGKLRRGL. Positions 172–207 constitute an EF-hand 1 domain; that stretch reads KPHSGFHVAFKMLDTDGNEMIEKREFFKLQKIISKQ. Asp185, Asp187, Asn189, Met191, Glu193, and Glu196 together coordinate Ca(2+). Ser205 carries the post-translational modification Phosphoserine. One can recognise an EF-hand 2; degenerate domain in the interval 227-262; it reads EPEINTTLQMRFFGKRGQRKLHYKEFRRFMENLQTE. The EF-hand 3; degenerate domain occupies 293 to 328; that stretch reads TENKDIYWKNVREKLSAGESISLDEFKSFCHFTTHL. The 36-residue stretch at 362 to 397 folds into the EF-hand 4 domain; the sequence is LSNNILDTVFKIFDLDGDECLSHEEFLGVLKNRMHR. Ca(2+)-binding residues include Asp375, Asp377, Asp379, Cys381, and Glu386.

Belongs to the MICU1 family. MICU2 subfamily. Heterodimer; disulfide-linked; heterodimerizes with MICU1. Component of the uniplex complex, composed of MCU, EMRE/SMDT1, MICU1 and MICU2 in a 4:4:1:1 stoichiometry.

The protein localises to the mitochondrion intermembrane space. It localises to the mitochondrion inner membrane. Calcium sensor of the mitochondrial calcium uniporter (MCU) channel, which senses calcium level via its EF-hand domains. MICU1 and MICU2 form a disulfide-linked heterodimer that stimulates and inhibits MCU activity, depending on the concentration of calcium. At low calcium levels, MICU1 occludes the pore of the MCU channel, preventing mitochondrial calcium uptake. At higher calcium levels, calcium-binding to MICU1 and MICU2 induces a conformational change that weakens MCU-MICU1 interactions and moves the MICU1-MICU2 heterodimer away from the pore, allowing calcium permeation through the MCU channel. This chain is Calcium uptake protein 2, mitochondrial, found in Homo sapiens (Human).